The sequence spans 207 residues: Protein 6b (207 aa).

The disordered stretch occupies residues 160 to 183 (GNYTEEGEDDDDEMDDEGEAGGAE). Positions 164–178 (EEGEDDDDEMDDEGE) are enriched in acidic residues.

Its function is as follows. Involved in tumor formation and increases auxin and cytokinin effects in host plants. This chain is Protein 6b (6b), found in Agrobacterium tumefaciens (strain Ach5).